A 1009-amino-acid polypeptide reads, in one-letter code: DNA ligase 3 (1009 aa).

A mitochondrion-targeting transit peptide spans 1–42 (MSLAFKIFFPQTLRALSRKELCLFRKHHWRDVRQFSQWSETD). The segment at 93–185 (FCVDYAKRGT…QITQHIADLS (93 aa)) adopts a PARP-type zinc-finger fold. 4 residues coordinate Zn(2+): C105, C108, H139, and C142. A phosphoserine mark is found at S210, S216, S227, and S242. The segment at 224 to 256 (RKFSGFSAKPNNSGEAPSSPTPKRSLSSSKCDP) is disordered. Positions 240–252 (PSSPTPKRSLSSS) are enriched in low complexity. Interaction with DNA stretches follow at residues 277–280 (PSYN), 318–323 (VYNLND), 388–391 (TKED), and 421–427 (KMNSGAK). Residue E506 participates in ATP binding. The N6-AMP-lysine intermediate role is filled by K508. ATP is bound by residues R513 and R528. Mg(2+) contacts are provided by E560 and E655. ATP is bound by residues K660, R671, and K675. The disordered stretch occupies residues 842-917 (AGDEGSSTTG…LATKSSPVKV (76 aa)). Composition is skewed to low complexity over residues 845 to 854 (EGSSTTGGSS) and 863 to 877 (SAVS…SAST). Positions 884–898 (LSNSNSKDGNMQTAK) are enriched in polar residues. S913 carries the phosphoserine modification. Residues 933–1009 (VLLDIFTGVR…IRKRRLVAPC (77 aa)) enclose the BRCT domain.

The protein belongs to the ATP-dependent DNA ligase family. As to quaternary structure, isoform 3 interacts (via BRCT domain) with the nuclear DNA-repair protein XRCC1. Interacts with POLG. Interacts with POLB. Mg(2+) serves as cofactor. As to expression, testis, thymus, prostate and heart.

It is found in the mitochondrion. The protein localises to the nucleus. The enzyme catalyses ATP + (deoxyribonucleotide)n-3'-hydroxyl + 5'-phospho-(deoxyribonucleotide)m = (deoxyribonucleotide)n+m + AMP + diphosphate.. Its function is as follows. Isoform 3 functions as a heterodimer with DNA-repair protein XRCC1 in the nucleus and can correct defective DNA strand-break repair and sister chromatid exchange following treatment with ionizing radiation and alkylating agents. Isoform 1 is targeted to mitochondria, where it functions as a DNA ligase in mitochondrial base-excision DNA repair. This is DNA ligase 3 (LIG3) from Homo sapiens (Human).